A 1203-amino-acid polypeptide reads, in one-letter code: Protein patched homolog 2 (1203 aa).

The Cytoplasmic segment spans residues 1–57; sequence MTRSPPLRELPPSYTPPARTAAPQILAGSLKAPLWLRAYFQGLLFSLGCGIQRHCGK. A helical membrane pass occupies residues 58 to 78; it reads VLFLGLLAFGALALGLRMAII. The Extracellular segment spans residues 79–392; the sequence is ETNLEQLWVE…LDDILHAFSE (314 aa). Asparagine 370 is a glycosylation site (N-linked (GlcNAc...) asparagine). The chain crosses the membrane as a helical span at residues 393–413; the sequence is VSAARVVGGYLLMLAYACVTM. The 159-residue stretch at 394 to 552 folds into the SSD domain; the sequence is SAARVVGGYL…MLVFPAILSL (159 aa). Residues 414–428 lie on the Cytoplasmic side of the membrane; sequence LRWDCAQSQGSVGLA. The chain crosses the membrane as a helical span at residues 429–449; it reads GVLLVALAVASGLGLCALLGI. Residues 450-457 lie on the Extracellular side of the membrane; the sequence is TFNAATTQ. Residues 458-478 traverse the membrane as a helical segment; that stretch reads VLPFLALGIGVDDVFLLAHAF. Topologically, residues 479-501 are cytoplasmic; sequence TEALPGTPLQERMGECLQRTGTS. Residues 502 to 522 form a helical membrane-spanning segment; that stretch reads VVLTSINNMAAFLMAALVPIP. Residues 523 to 531 are Extracellular-facing; sequence ALRAFSLQA. Residues 532–552 form a helical membrane-spanning segment; the sequence is AIVVGCTFVAVMLVFPAILSL. Over 553–686 the chain is Cytoplasmic; sequence DLRRRHCQRL…APLLLQSHAK (134 aa). The chain crosses the membrane as a helical span at residues 687 to 707; it reads AIVLVLFGALLGLSLYGATLV. Topologically, residues 708–963 are extracellular; that stretch reads QDGLALTDVV…WEQYLGLRRC (256 aa). The N-linked (GlcNAc...) asparagine glycan is linked to asparagine 812. The helical transmembrane segment at 964–984 threads the bilayer; the sequence is FLLAVCILLVCTFLVCALLLL. Over 985 to 991 the chain is Cytoplasmic; that stretch reads NPWTAGL. A helical membrane pass occupies residues 992–1012; the sequence is IVLVLAMMTVELFGIMGFLGI. Position 1013 (lysine 1013) is a topological domain, extracellular. A helical membrane pass occupies residues 1014 to 1034; it reads LSAIPVVILVASVGIGVEFTV. Topologically, residues 1035–1064 are cytoplasmic; that stretch reads HVALGFLTTQGSRNLRAAHALEHTFAPVTD. A helical transmembrane segment spans residues 1065 to 1085; the sequence is GAISTLLGLLMLAGSHFDFIV. At 1086 to 1093 the chain is on the extracellular side; sequence RYFFAALT. Residues 1094 to 1114 form a helical membrane-spanning segment; the sequence is VLTLLGLLHGLVLLPVLLSIL. The Cytoplasmic portion of the chain corresponds to 1115–1203; that stretch reads GPPPEVIQMY…SSRGPGPATG (89 aa). Positions 1171 to 1203 are disordered; it reads GAYIHPAPDEPPWSPAATSSGNLSSRGPGPATG. Residues 1186–1195 are compositionally biased toward polar residues; sequence AATSSGNLSS.

It belongs to the patched family.

Its subcellular location is the membrane. Plays a role in the control of cellular growth. May have a role in epidermal development. May act as a receptor for Sonic hedgehog (SHH). This Homo sapiens (Human) protein is Protein patched homolog 2 (PTCH2).